The primary structure comprises 698 residues: MARTTPIERYRNIGIMAHIDAGKTTTTERILFYTGVSHKIGEVHDGAAIMDWMEQEQERGITITSAATTCFWRGMDGSFPEYRINIIDTPGHVDFTIEVERSLRVLDGACAIFCAVGGVEPQSETVWRQADKYGVPRLAFVNKMDRAGADFLRVVDQIRSRLGGSPVPVQLPIGAEDEFKGVVDLLRMKAIWWDDSTQGMRFSLGDVPAEMVAACVAWREKMVEAAAEASEDLMEKYLEGGELTVEEIKRGLRVRTLANEIVPVLCGSAFKNKGVQAMLDAVVDYLPSPVDTPPVVGIGEGGLESSRKSCDNASFSALAFKIATDPYVGVLTFIRVYSGVLSSGDTVYNPVKDRRERIGRLVQMHANNREEVKEVRAGDIAAAIGLKDVTTGDTLCDPKDVITLERMEFPEPVISVAVEPKTKADQEKMGIALNKLAQEDPSFRVRTDEESGQTIISGMGELHLEIIVDRMKREFGVDANVGAPQVAYRETIRKAVEQEGKYVRQTGGRGQYGHVWLRIEPLDPGGGYEFVNGIVGGVVPKEYIPAVDKGIQEQLQNGVLAGFPVVDVRVTLFDGSYHDVDSSEMAFKIAGSMAFKEGARKASPVLLEPIMKVEVVTPEEYMGDVVGDINRRRGIVQGMDEVPAGKVIRCEVPLSEMFGYATDLRSATQGRATYSMHFEKYVEAPTHVADAVIKKSVS.

Residues Glu8–Val290 enclose the tr-type G domain. Residues Ala17–Thr24, Asp88–His92, and Asn142–Asp145 each bind GTP.

This sequence belongs to the TRAFAC class translation factor GTPase superfamily. Classic translation factor GTPase family. EF-G/EF-2 subfamily.

It localises to the cytoplasm. Functionally, catalyzes the GTP-dependent ribosomal translocation step during translation elongation. During this step, the ribosome changes from the pre-translocational (PRE) to the post-translocational (POST) state as the newly formed A-site-bound peptidyl-tRNA and P-site-bound deacylated tRNA move to the P and E sites, respectively. Catalyzes the coordinated movement of the two tRNA molecules, the mRNA and conformational changes in the ribosome. The sequence is that of Elongation factor G 2 from Methylococcus capsulatus (strain ATCC 33009 / NCIMB 11132 / Bath).